Here is a 110-residue protein sequence, read N- to C-terminus: Cell cycle protein GpsB (110 aa).

A coiled-coil region spans residues 32 to 73; the sequence is LDDVIKDYENYLEQIEKLQMENRRLQQALDKKESEASNVRNS.

Belongs to the GpsB family. In terms of assembly, forms polymers through the coiled coil domains. Interacts with PBP1, MreC and EzrA.

Its subcellular location is the cytoplasm. Divisome component that associates with the complex late in its assembly, after the Z-ring is formed, and is dependent on DivIC and PBP2B for its recruitment to the divisome. Together with EzrA, is a key component of the system that regulates PBP1 localization during cell cycle progression. Its main role could be the removal of PBP1 from the cell pole after pole maturation is completed. Also contributes to the recruitment of PBP1 to the division complex. Not essential for septum formation. This Streptococcus agalactiae serotype Ia (strain ATCC 27591 / A909 / CDC SS700) protein is Cell cycle protein GpsB.